Here is a 224-residue protein sequence, read N- to C-terminus: 7-cyano-7-deazaguanine synthase (224 aa).

10 to 20 (LSGGLDSATVV) provides a ligand contact to ATP. Residues Cys-189, Cys-199, Cys-202, and Cys-205 each coordinate Zn(2+).

Belongs to the QueC family. Zn(2+) is required as a cofactor.

The enzyme catalyses 7-carboxy-7-deazaguanine + NH4(+) + ATP = 7-cyano-7-deazaguanine + ADP + phosphate + H2O + H(+). Its pathway is purine metabolism; 7-cyano-7-deazaguanine biosynthesis. Catalyzes the ATP-dependent conversion of 7-carboxy-7-deazaguanine (CDG) to 7-cyano-7-deazaguanine (preQ(0)). The sequence is that of 7-cyano-7-deazaguanine synthase from Pseudomonas paraeruginosa (strain DSM 24068 / PA7) (Pseudomonas aeruginosa (strain PA7)).